A 97-amino-acid polypeptide reads, in one-letter code: Large ribosomal subunit protein uL23 (97 aa).

It belongs to the universal ribosomal protein uL23 family. In terms of assembly, part of the 50S ribosomal subunit. Contacts protein L29, and trigger factor when it is bound to the ribosome.

Functionally, one of the early assembly proteins it binds 23S rRNA. One of the proteins that surrounds the polypeptide exit tunnel on the outside of the ribosome. Forms the main docking site for trigger factor binding to the ribosome. In Lactococcus lactis subsp. cremoris (strain SK11), this protein is Large ribosomal subunit protein uL23.